We begin with the raw amino-acid sequence, 187 residues long: EP300-interacting inhibitor of differentiation 1 (187 aa).

Residues 1 to 118 form a disordered region; it reads MSEMAELSEL…YDYPEEEQLS (118 aa). Composition is skewed to acidic residues over residues 52–63 and 93–116; these read LEEEGPMEEEEA and FESE…EEEQ. The tract at residues 54-120 is interaction with NR0B2; it reads EEGPMEEEEA…YPEEEQLSGA (67 aa). Residues 178–182 carry the LXCXE motif motif; it reads LGCDE.

Interacts via its LXCXE motif with the entire pocket region of RB1. Interacts with EP300, NR0B2 and TRIM27. Post-translationally, ubiquitinated in U2OS osteosarcoma cells and is rapidly degraded by proteasome as cells exit the cell cycle exit. In terms of tissue distribution, widely expressed. Most abundantly expressed in heart, skeletal muscle, pancreas, brain and testis. Expressed at much lower levels in placenta and peripheral blood leukocyte. Barely detectable in lung. Also weakly expressed in lung carcinoma A-549 and various leukemia cell lines.

Its subcellular location is the nucleus. It localises to the cytoplasm. In terms of biological role, interacts with RB1 and EP300 and acts as a repressor of MYOD1 transactivation. Inhibits EP300 and CBP histone acetyltransferase activity. May be involved in coupling cell cycle exit to the transcriptional activation of genes required for cellular differentiation. May act as a candidate coinhibitory factor for NR0B2 that can be directly linked to transcription inhibitory mechanisms. The polypeptide is EP300-interacting inhibitor of differentiation 1 (Homo sapiens (Human)).